Here is a 508-residue protein sequence, read N- to C-terminus: Probable cytosol aminopeptidase (508 aa).

Positions 274 and 279 each coordinate Mn(2+). Residue Lys286 is part of the active site. Residues Asp297, Asp356, and Glu358 each contribute to the Mn(2+) site. Arg360 is an active-site residue.

The protein belongs to the peptidase M17 family. Mn(2+) serves as cofactor.

The protein resides in the cytoplasm. It catalyses the reaction Release of an N-terminal amino acid, Xaa-|-Yaa-, in which Xaa is preferably Leu, but may be other amino acids including Pro although not Arg or Lys, and Yaa may be Pro. Amino acid amides and methyl esters are also readily hydrolyzed, but rates on arylamides are exceedingly low.. The catalysed reaction is Release of an N-terminal amino acid, preferentially leucine, but not glutamic or aspartic acids.. Presumably involved in the processing and regular turnover of intracellular proteins. Catalyzes the removal of unsubstituted N-terminal amino acids from various peptides. The polypeptide is Probable cytosol aminopeptidase (Paraburkholderia xenovorans (strain LB400)).